Reading from the N-terminus, the 577-residue chain is Anthranilate synthase alpha subunit 1, chloroplastic (577 aa).

The transit peptide at 1–34 directs the protein to the chloroplast; it reads MASLVLSLRIAPSTPPLGLGGGRFRGRRGAVACR.

Belongs to the anthranilate synthase component I family. As to quaternary structure, heterotetramer consisting of two non-identical subunits: a beta subunit and a large alpha subunit.

Its subcellular location is the plastid. The protein resides in the chloroplast. The enzyme catalyses chorismate + L-glutamine = anthranilate + pyruvate + L-glutamate + H(+). It functions in the pathway amino-acid biosynthesis; L-tryptophan biosynthesis; L-tryptophan from chorismate: step 1/5. Feedback inhibition by tryptophan. Functionally, part of a heterotetrameric complex that catalyzes the two-step biosynthesis of anthranilate, an intermediate in the biosynthesis of L-tryptophan. In the first step, the glutamine-binding beta subunit of anthranilate synthase (AS) provides the glutamine amidotransferase activity which generates ammonia as a substrate that, along with chorismate, is used in the second step, catalyzed by the large alpha subunit of AS to produce anthranilate. The protein is Anthranilate synthase alpha subunit 1, chloroplastic of Oryza sativa subsp. japonica (Rice).